A 452-amino-acid polypeptide reads, in one-letter code: Isocitrate dehydrogenase [NADP], mitochondrial (452 aa).

The N-terminal 39 residues, 1 to 39 (MAGYLRVVRSLCRASGSRPAWAPAALTAPTSQEQTRRHY), are a transit peptide targeting the mitochondrion. Residues Lys45, Lys48, Lys67, and Lys69 each carry the N6-acetyllysine modification. Residues Lys80 and Lys106 each carry the N6-acetyllysine; alternate modification. Residues Lys80 and Lys106 each carry the N6-succinyllysine; alternate modification. NADP(+) is bound by residues 115-117 (TIT) and Arg122. Thr117 serves as a coordination point for substrate. Substrate contacts are provided by residues 134 to 140 (SPNGTIR) and Arg149. Position 155 is an N6-acetyllysine (Lys155). Lys166 carries the post-translational modification N6-acetyllysine; alternate. The residue at position 166 (Lys166) is an N6-succinyllysine; alternate. Arg172 is a binding site for substrate. Lys180 and Lys193 each carry N6-acetyllysine; alternate. An N6-succinyllysine; alternate mark is found at Lys180 and Lys193. Lys199 bears the N6-acetyllysine mark. Lys256 is modified (N6-acetyllysine; alternate). Lys256 carries the post-translational modification N6-succinyllysine; alternate. Lys263, Lys272, Lys275, and Lys280 each carry N6-acetyllysine. Lys282 carries the post-translational modification N6-acetyllysine; alternate. N6-succinyllysine; alternate is present on Lys282. Asp291 contributes to the Mn(2+) binding site. Lys299 serves as a coordination point for NADP(+). Asp314 contributes to the Mn(2+) binding site. Residues 349-354 (GTVTRH) and Asn367 contribute to the NADP(+) site. Lys384 bears the N6-acetyllysine; alternate mark. Lys384 bears the N6-succinyllysine; alternate mark. N6-acetyllysine occurs at positions 400, 413, and 442.

Belongs to the isocitrate and isopropylmalate dehydrogenases family. Homodimer. Requires Mg(2+) as cofactor. Mn(2+) is required as a cofactor. In terms of processing, acetylation at Lys-413 dramatically reduces catalytic activity. Deacetylated by SIRT3.

It is found in the mitochondrion. The catalysed reaction is D-threo-isocitrate + NADP(+) = 2-oxoglutarate + CO2 + NADPH. Plays a role in intermediary metabolism and energy production. It may tightly associate or interact with the pyruvate dehydrogenase complex. This chain is Isocitrate dehydrogenase [NADP], mitochondrial (IDH2), found in Macaca fascicularis (Crab-eating macaque).